A 785-amino-acid chain; its full sequence is Endonuclease MutS2 (785 aa).

An ATP-binding site is contributed by 334–341 (GPNTGGKT). The Smr domain maps to 710 to 785 (LDLRGQRYDE…GNGATIVKLK (76 aa)).

This sequence belongs to the DNA mismatch repair MutS family. MutS2 subfamily. As to quaternary structure, homodimer. Binds to stalled ribosomes, contacting rRNA.

Its function is as follows. Endonuclease that is involved in the suppression of homologous recombination and thus may have a key role in the control of bacterial genetic diversity. In terms of biological role, acts as a ribosome collision sensor, splitting the ribosome into its 2 subunits. Detects stalled/collided 70S ribosomes which it binds and splits by an ATP-hydrolysis driven conformational change. Acts upstream of the ribosome quality control system (RQC), a ribosome-associated complex that mediates the extraction of incompletely synthesized nascent chains from stalled ribosomes and their subsequent degradation. Probably generates substrates for RQC. This Lactobacillus helveticus (strain DPC 4571) protein is Endonuclease MutS2.